The primary structure comprises 164 residues: Superoxide dismutase [Cu-Zn] 3 (164 aa).

The Cu cation site is built by histidine 51, histidine 53, and histidine 68. A disulfide bridge links cysteine 62 with cysteine 151. 4 residues coordinate Zn(2+): histidine 68, histidine 76, histidine 85, and aspartate 88. Histidine 125 is a Cu cation binding site. The Peroxisome localization signal motif lies at 162 to 164 (AKL).

The protein belongs to the Cu-Zn superoxide dismutase family. Homodimer. Requires Cu cation as cofactor. The cofactor is Zn(2+). As to expression, expressed in leaves (at protein level).

Its subcellular location is the peroxisome. The enzyme catalyses 2 superoxide + 2 H(+) = H2O2 + O2. In terms of biological role, destroys radicals which are normally produced within the cells and which are toxic to biological systems. In Arabidopsis thaliana (Mouse-ear cress), this protein is Superoxide dismutase [Cu-Zn] 3 (CSD3).